Consider the following 102-residue polypeptide: MAKQKIRIRLKAYDHKILDQSAEKIVDTAKRSGANVSGPIPLPTEKAVYTILRAVHKYKDSREQFEMRTHKRLIDILNPTPQTVDALMRLDLPSGVDIEIKL.

The protein belongs to the universal ribosomal protein uS10 family. In terms of assembly, part of the 30S ribosomal subunit.

Functionally, involved in the binding of tRNA to the ribosomes. This is Small ribosomal subunit protein uS10 from Brevibacillus brevis (strain 47 / JCM 6285 / NBRC 100599).